The sequence spans 460 residues: Antizyme inhibitor 2 (460 aa).

The segment at 117 to 140 (QIAQIKYAAKHGIQLLSFDNEMEL) is necessary for polyamine uptake stimulation.

The protein belongs to the Orn/Lys/Arg decarboxylase class-II family. ODC antizyme inhibitor subfamily. As to quaternary structure, monomer. Interacts with OAZ1, OAZ2 and OAZ3; this interaction disrupts the interaction between the antizyme and ODC1. Does not form a heterodimer with ODC1. Ubiquitinated, leading to its proteasomal degradation; a process that is reduced in presence of antizymes. May also be degraded through the lysosomal degradative pathway in a proteasomal-independent manner. In terms of tissue distribution, expressed in the neocortex, thalamus, hippocampus, cerebellum, medulla oblongata, gray and white matter. Expressed in neurons, oligodendrocytes, basket, Purkinje and pyramidal cells. Expressed in spermatocytes and Leydig cells of the testis. Expressed in luteal theca cells lining corpus luteum cysts and in hilus cells of the ovary. Expressed in primary and neoplastic mast cells (MC) (at protein level). Highly expressed in brain. Also expressed in testis.

It is found in the nucleus. It localises to the cytoplasm. The protein localises to the perinuclear region. The protein resides in the membrane. Its subcellular location is the cytoplasmic vesicle. It is found in the endoplasmic reticulum-Golgi intermediate compartment. It localises to the golgi apparatus. The protein localises to the cis-Golgi network. The protein resides in the trans-Golgi network. Its subcellular location is the cytoplasmic granule. It is found in the cell projection. It localises to the axon. The protein localises to the dendrite. The protein resides in the perikaryon. Functionally, antizyme inhibitor (AZI) protein that positively regulates ornithine decarboxylase (ODC) activity and polyamine uptake. AZI is an enzymatically inactive ODC homolog that counteracts the negative effect of ODC antizymes (AZs) OAZ1, OAZ2 and OAZ3 on ODC activity by competing with ODC for antizyme-binding. Inhibits antizyme-dependent ODC degradation and releases ODC monomers from their inactive complex with antizymes, leading to formation of the catalytically active ODC homodimer and restoring polyamine production. Participates in the morphological integrity of the trans-Golgi network (TGN) and functions as a regulator of intracellular secretory vesicle trafficking. The protein is Antizyme inhibitor 2 (AZIN2) of Homo sapiens (Human).